The sequence spans 306 residues: D-alanine--D-alanine ligase (306 aa).

The ATP-grasp domain occupies 102–300 (KIIAANAGVC…YGDIVQWMVE (199 aa)). 128–183 (PMEPPYVIKPVCEGSSFGVVIVQENEAVPPHNIGGSEWGYADEVMVEKYIPGRELT) serves as a coordination point for ATP. Mg(2+) is bound by residues aspartate 253, glutamate 267, and asparagine 269.

This sequence belongs to the D-alanine--D-alanine ligase family. It depends on Mg(2+) as a cofactor. Requires Mn(2+) as cofactor.

The protein resides in the cytoplasm. It catalyses the reaction 2 D-alanine + ATP = D-alanyl-D-alanine + ADP + phosphate + H(+). It functions in the pathway cell wall biogenesis; peptidoglycan biosynthesis. In terms of biological role, cell wall formation. The chain is D-alanine--D-alanine ligase from Bartonella tribocorum (strain CIP 105476 / IBS 506).